The following is a 197-amino-acid chain: Heart- and neural crest derivatives-expressed protein 1 (197 aa).

2 disordered regions span residues 61-94 and 155-184; these read VVGPSQTSGRIENLGGKLGRRKGAPPKKERRRTE and VDGKRRREPQPTEGYWGAAPAGEKKLKGRT. The span at 78-90 shows a compositional bias: basic residues; it reads LGRRKGAPPKKER. Residues 80–132 enclose the bHLH domain; the sequence is RRKGAPPKKERRRTESINSAFAELRECIPNVPADTKLSKIKTLRLATSYIGYL.

Efficient DNA binding requires dimerization with another bHLH protein. In terms of tissue distribution, highly expressed in the adult heart and expressed at lower levels in the intestine and gall bladder.

It is found in the nucleus. The protein localises to the nucleolus. Plays an essential role in cardiac morphogenesis. The chain is Heart- and neural crest derivatives-expressed protein 1 (hand1) from Xenopus laevis (African clawed frog).